A 1017-amino-acid chain; its full sequence is MDGREYSPAATTSENGGGRRKQKEKELDELKKEVNLDDHKLSLDELGRKYQVDLSRGLSNARAAEVLAQDGPNALTPPPTTPEWVKFCRQLFGGFSILLWIGAILCFLAYGIQAAMEDEPSNDNLYLGVVLAAVVIVTGCFSYYQEAKSSKIMDSFKNMVPQQALVIREGEKIQINAENVVVGDLVEVKGGDRVPADMRIISSHGCKVDNSSLTGESEPQTRSPEFTHENPLETRNICFFSTNCVEGTARGIVISTGDRTVMGRIASLASGLEVGRTPIAMEIEHFIRLITGVAVFLGLSFFILSLILGYTWLEAVIFLIGIIVANVPEGLLATVTVCLTLTAKRMARKNCLVKNLEAVETLGSTSTICSDKTGTLTQNRMTVAHMWFDNQIHEADTTEDQSGATFDKRSPTWAALSRIAGLCNRAVFKPGQENISISKRDTAGDASESALLKCIQLSCGSVKKMRDKNPKVTEIPFNSTNKYQLSIHEREEDPQGHILVMKGAPERILERCSRILLQGQEVPLDEEMKEAFQNAYLELGGLGERVLGFCHLYLPPDKFPRGFRFDADEVNFPTSDLCFVGLMSMIDPPRAAVPDAVGKCRSAGIKVIMVTGDHPITAKAIAKGVGIISEGNETVEDIAARLNIPVSQVNPREAKACVVHGSDLKDMTAEQLDEILRNHTEIVFARTSPQQKLIIVEGCQRQGAIVAVTGDGVNDSPALKKADIGIAMGIAGSDVSKQAADMILLDDNFASIVTGVEEGRLIFDNLKKSIAYTLTSNIPEITPFLLFIIANIPLPLGTVTILCIDLGTDMVPAISLAYEAAESDIMKRQPRNPRTDKLVNERLISMAYGQIGMIQALGGFFTYFVILAENGFLPARLLGVRLAWDDRSTNDLEDSYGQEWTYEQRKVVEFTCHTAFFASIVVVQWADLIICKTRRNSVFQQGMKNKILIFGLLEETALAAFLSYCPGMGVALRMYPLKVTWWFCAFPYSLLIFAYDEVRKLILRRYPGGWVEKETYY.

Residues 1–31 are disordered; it reads MDGREYSPAATTSENGGGRRKQKEKELDELK. Residues 1 to 82 are Cytoplasmic-facing; the sequence is MDGREYSPAA…NALTPPPTTP (82 aa). The interval 77–79 is interaction with phosphoinositide-3 kinase; the sequence is PPP. Residues 83–103 form a helical membrane-spanning segment; the sequence is EWVKFCRQLFGGFSILLWIGA. At 104–126 the chain is on the extracellular side; the sequence is ILCFLAYGIQAAMEDEPSNDNLY. The helical transmembrane segment at 127-147 threads the bilayer; that stretch reads LGVVLAAVVIVTGCFSYYQEA. At 148–283 the chain is on the cytoplasmic side; the sequence is KSSKIMDSFK…VGRTPIAMEI (136 aa). The disordered stretch occupies residues 207–228; sequence KVDNSSLTGESEPQTRSPEFTH. Positions 209–224 are enriched in polar residues; the sequence is DNSSLTGESEPQTRSP. The chain crosses the membrane as a helical span at residues 284-303; that stretch reads EHFIRLITGVAVFLGLSFFI. The Extracellular segment spans residues 304 to 315; it reads LSLILGYTWLEA. The helical transmembrane segment at 316-333 threads the bilayer; that stretch reads VIFLIGIIVANVPEGLLA. Over 334–766 the chain is Cytoplasmic; the sequence is TVTVCLTLTA…EEGRLIFDNL (433 aa). Catalysis depends on aspartate 371, which acts as the 4-aspartylphosphate intermediate. ATP is bound at residue lysine 502. The Mg(2+) site is built by aspartate 711 and aspartate 715. Residues 767 to 786 traverse the membrane as a helical segment; that stretch reads KKSIAYTLTSNIPEITPFLL. The Extracellular segment spans residues 787–796; the sequence is FIIANIPLPL. A helical transmembrane segment spans residues 797–817; the sequence is GTVTILCIDLGTDMVPAISLA. Residues 818-837 are Cytoplasmic-facing; sequence YEAAESDIMKRQPRNPRTDK. The chain crosses the membrane as a helical span at residues 838–860; it reads LVNERLISMAYGQIGMIQALGGF. The Extracellular portion of the chain corresponds to 861–912; sequence FTYFVILAENGFLPARLLGVRLAWDDRSTNDLEDSYGQEWTYEQRKVVEFTC. The helical transmembrane segment at 913–932 threads the bilayer; that stretch reads HTAFFASIVVVQWADLIICK. Topologically, residues 933–945 are cytoplasmic; the sequence is TRRNSVFQQGMKN. Residue serine 937 is modified to Phosphoserine; by PKA. Residues 946-964 form a helical membrane-spanning segment; sequence KILIFGLLEETALAAFLSY. Over 965–979 the chain is Extracellular; the sequence is CPGMGVALRMYPLKV. A helical membrane pass occupies residues 980-1000; sequence TWWFCAFPYSLLIFAYDEVRK. The Cytoplasmic segment spans residues 1001 to 1017; the sequence is LILRRYPGGWVEKETYY.

The protein belongs to the cation transport ATPase (P-type) (TC 3.A.3) family. Type IIC subfamily. The sodium/potassium-transporting ATPase is composed of a catalytic alpha subunit, an auxiliary non-catalytic beta subunit and an additional regulatory subunit.

Its subcellular location is the membrane. It localises to the cell membrane. The enzyme catalyses K(+)(out) + Na(+)(in) + ATP + H2O = K(+)(in) + Na(+)(out) + ADP + phosphate + H(+). Its function is as follows. This is the catalytic component of the active enzyme, which catalyzes the hydrolysis of ATP coupled with the exchange of sodium and potassium ions across the plasma membrane. This action creates the electrochemical gradient of sodium and potassium ions, providing the energy for active transport of various nutrients. This chain is Sodium/potassium-transporting ATPase subunit alpha-2 (ATP1A2), found in Gallus gallus (Chicken).